Reading from the N-terminus, the 433-residue chain is MAQFYSAKRRTTTRQIITVSVNDLDSFGQGVARHNGKTLFIPGLLPQENAEVTVTEDKKQYARAKVVRRLSDSPERETPRCPHFGVCGGCQQQHASVDLQQRSKSAALARLMKHEVSEVIADVPWGYRRRARLSLNYLPKTQQLQMGFRKAGSSDIVDVKQCPILVPQLEALLPKVRACLGSLQAMRHLGHVELVQATSGTLMILRHTAPLSSADREKLECFSHSEGLDLYLAPDSEILETVSGEMPWYDSNGLRLTFSPRDFIQVNAGVNQKMVARALEWLDVEPEDRVLDLFCGMGNFTLPLATQAASVVGVEGVPALVEKGQQNARLNGLQNVTFYHENLEEDVTKQPWAKNGFDKVLLDPARAGAAGVMQQIIKLEPIRIVYVSCNPATLARDSEALLKAGYTIARLAMLDMFPHTGHLESMVLFSRVK.

The region spanning Arg10–Arg68 is the TRAM domain. The [4Fe-4S] cluster site is built by Cys81, Cys87, Cys90, and Cys162. Positions 265, 294, 299, 315, 342, and 363 each coordinate S-adenosyl-L-methionine. Residue Cys389 is the Nucleophile of the active site.

The protein belongs to the class I-like SAM-binding methyltransferase superfamily. RNA M5U methyltransferase family. RlmD subfamily.

It catalyses the reaction uridine(1939) in 23S rRNA + S-adenosyl-L-methionine = 5-methyluridine(1939) in 23S rRNA + S-adenosyl-L-homocysteine + H(+). In terms of biological role, catalyzes the formation of 5-methyl-uridine at position 1939 (m5U1939) in 23S rRNA. The polypeptide is 23S rRNA (uracil(1939)-C(5))-methyltransferase RlmD (Escherichia coli O6:K15:H31 (strain 536 / UPEC)).